The sequence spans 810 residues: Zinc finger CCCH domain-containing protein 11A (810 aa).

3 consecutive C3H1-type zinc fingers follow at residues 2-29, 31-57, and 60-86; these read PNQG…HCEA, IGNE…HMEI, and KRSE…HHNR. The residue at position 108 (serine 108) is a Phosphoserine. Residues lysine 114 and lysine 124 each participate in a glycyl lysine isopeptide (Lys-Gly) (interchain with G-Cter in SUMO2) cross-link. Serine 132 carries the post-translational modification Phosphoserine. Disordered stretches follow at residues 139–194, 223–258, 285–351, and 367–432; these read MKVE…GLRV, KKMK…ENVR, GKRK…DKVN, and ERAS…TTCI. Lysine 140 participates in a covalent cross-link: Glycyl lysine isopeptide (Lys-Gly) (interchain with G-Cter in SUMO2). A phosphoserine mark is found at serine 149 and serine 171. The segment covering 160–175 has biased composition (acidic residues); the sequence is ADDDEDDDDQFSEEGD. Serine 290 bears the Phosphoserine mark. Basic and acidic residues-rich tracts occupy residues 309 to 322 and 367 to 390; these read KKVE…DKTP and ERAS…KTDD. Threonine 321 bears the Phosphothreonine mark. The stretch at 362 to 423 forms a coiled coil; that stretch reads EEILLERASQ…KHRQQEAERQ (62 aa). Residue serine 370 is modified to Phosphoserine. A compositionally biased stretch (polar residues) spans 391–402; the sequence is STSGARSSSTIR. The segment covering 417 to 432 has biased composition (basic and acidic residues); sequence QQEAERQKSKKDTTCI. Residue lysine 478 forms a Glycyl lysine isopeptide (Lys-Gly) (interchain with G-Cter in SUMO2) linkage. The disordered stretch occupies residues 482–549; that stretch reads ALRVQQSSES…KEASGETTGV (68 aa). Low complexity predominate over residues 486–498; that stretch reads QQSSESSTSSPSQ. Lysine 619 participates in a covalent cross-link: Glycyl lysine isopeptide (Lys-Gly) (interchain with G-Cter in SUMO2). The disordered stretch occupies residues 715-768; it reads TVPEAENPRDSLVLPPTQSSSDSSPPEVSGPSSSQMSMKTRRLSSASTGKPPLS. Residues 729 to 748 show a composition bias toward low complexity; the sequence is PPTQSSSDSSPPEVSGPSSS. The span at 749–762 shows a compositional bias: polar residues; that stretch reads QMSMKTRRLSSAST.

In terms of assembly, interacts with TREX complex components THOC2, DDX39 and POLDIP3; the interactions are ATP-dependent. Interacts with PABPN1; this interaction retains ZC3H11A in nuclear speckles. Interacts with KPNA3.

The protein resides in the nucleus. It localises to the nucleus speckle. Its function is as follows. Through its association with TREX complex components, may participate in the export and post-transcriptional coordination of selected mRNA transcripts, including those required to maintain the metabolic processes in embryonic cells. Binds RNA. Functionally, (Microbial infection) Plays a role in efficient growth of several nuclear-replicating viruses such as HIV-1, influenza virus or herpes simplex virus 1/HHV-1. Required for efficient viral mRNA export. May be required for proper polyadenylation of adenovirus type 5/HAdV-5 capsid mRNA. This chain is Zinc finger CCCH domain-containing protein 11A (ZC3H11A), found in Homo sapiens (Human).